Consider the following 250-residue polypeptide: NAD-dependent protein deacylase 1 (250 aa).

The Deacetylase sirtuin-type domain maps to 1-250 (MRAVVELLAG…PELLRRAFPG (250 aa)). 19–39 (GAGVSAESGIPTFRDALGGLW) is an NAD(+) binding site. Substrate-binding residues include Y64 and R67. Residue 98–101 (QNVD) coordinates NAD(+). Catalysis depends on H116, which acts as the Proton acceptor. The Zn(2+) site is built by C124, C127, C152, and C155. Residues 192 to 194 (GTS), 218 to 220 (NPQ), and A236 each bind NAD(+).

Belongs to the sirtuin family. Class III subfamily. It depends on Zn(2+) as a cofactor.

The protein resides in the cytoplasm. It catalyses the reaction N(6)-acetyl-L-lysyl-[protein] + NAD(+) + H2O = 2''-O-acetyl-ADP-D-ribose + nicotinamide + L-lysyl-[protein]. The catalysed reaction is N(6)-succinyl-L-lysyl-[protein] + NAD(+) + H2O = 2''-O-succinyl-ADP-D-ribose + nicotinamide + L-lysyl-[protein]. In terms of biological role, NAD-dependent lysine deacetylase and desuccinylase that specifically removes acetyl and succinyl groups on target proteins. Modulates the activities of several proteins which are inactive in their acylated form. The chain is NAD-dependent protein deacylase 1 from Pseudomonas aeruginosa (strain ATCC 15692 / DSM 22644 / CIP 104116 / JCM 14847 / LMG 12228 / 1C / PRS 101 / PAO1).